The following is a 246-amino-acid chain: 1-(5-phosphoribosyl)-5-[(5-phosphoribosylamino)methylideneamino] imidazole-4-carboxamide isomerase (246 aa).

Residue Asp8 is the Proton acceptor of the active site. The active-site Proton donor is Asp130.

This sequence belongs to the HisA/HisF family.

Its subcellular location is the cytoplasm. The catalysed reaction is 1-(5-phospho-beta-D-ribosyl)-5-[(5-phospho-beta-D-ribosylamino)methylideneamino]imidazole-4-carboxamide = 5-[(5-phospho-1-deoxy-D-ribulos-1-ylimino)methylamino]-1-(5-phospho-beta-D-ribosyl)imidazole-4-carboxamide. It functions in the pathway amino-acid biosynthesis; L-histidine biosynthesis; L-histidine from 5-phospho-alpha-D-ribose 1-diphosphate: step 4/9. This chain is 1-(5-phosphoribosyl)-5-[(5-phosphoribosylamino)methylideneamino] imidazole-4-carboxamide isomerase, found in Shigella sonnei (strain Ss046).